The chain runs to 542 residues: Chaperonin GroEL (542 aa).

ATP-binding positions include 29-32 (TLGP), Lys50, 86-90 (DGTTT), Gly415, and Asp495.

Belongs to the chaperonin (HSP60) family. As to quaternary structure, forms a cylinder of 14 subunits composed of two heptameric rings stacked back-to-back. Interacts with the co-chaperonin GroES.

It localises to the cytoplasm. It catalyses the reaction ATP + H2O + a folded polypeptide = ADP + phosphate + an unfolded polypeptide.. Together with its co-chaperonin GroES, plays an essential role in assisting protein folding. The GroEL-GroES system forms a nano-cage that allows encapsulation of the non-native substrate proteins and provides a physical environment optimized to promote and accelerate protein folding. This chain is Chaperonin GroEL, found in Flavobacterium psychrophilum (strain ATCC 49511 / DSM 21280 / CIP 103535 / JIP02/86).